The chain runs to 117 residues: G antigen 1 (117 aa).

A disordered region spans residues 1–117 (MSWRGRSTYY…PEEGEGQSQC (117 aa)). Acidic residues-rich tracts occupy residues 32–45 (FSDEVEPATPEEGE) and 87–96 (ECEDGPDGQE).

It belongs to the GAGE family. As to expression, expressed in a variety of tumor tissues but not in normal tissues, except testis.

In terms of biological role, antigen, recognized on melanoma by autologous cytolytic T-lymphocytes. The chain is G antigen 1 from Homo sapiens (Human).